The sequence spans 169 residues: Cilia- and flagella-associated protein 276 (169 aa).

Disordered stretches follow at residues 26–45 and 150–169; these read SKKL…EPWS and HTAA…FFST. Polar residues predominate over residues 36–45; it reads HLAQQQEPWS. The span at 160–169 shows a compositional bias: basic and acidic residues; that stretch reads RKKDGGFFST.

In terms of assembly, microtubule inner protein component of sperm flagellar doublet microtubules. In terms of tissue distribution, expressed in cerebrum, cerebellum, gastrocnemius muscle, spinal cord and lung tissues.

Its subcellular location is the cytoplasm. It localises to the cytoskeleton. The protein localises to the flagellum axoneme. The protein resides in the cilium axoneme. Its function is as follows. Microtubule inner protein (MIP) part of the dynein-decorated doublet microtubules (DMTs) in cilia axoneme, which is required for motile cilia beating. May play an important role for the maintenance of myelin-axon integrity. May affect intracellular Ca(2+) homeostasis. The sequence is that of Cilia- and flagella-associated protein 276 from Homo sapiens (Human).